A 482-amino-acid chain; its full sequence is UDP-N-acetylmuramate--L-alanine ligase (482 aa).

Residues M1 to Q26 are disordered. G140–T146 is a binding site for ATP.

This sequence belongs to the MurCDEF family.

It is found in the cytoplasm. The enzyme catalyses UDP-N-acetyl-alpha-D-muramate + L-alanine + ATP = UDP-N-acetyl-alpha-D-muramoyl-L-alanine + ADP + phosphate + H(+). It participates in cell wall biogenesis; peptidoglycan biosynthesis. Functionally, cell wall formation. In Deinococcus radiodurans (strain ATCC 13939 / DSM 20539 / JCM 16871 / CCUG 27074 / LMG 4051 / NBRC 15346 / NCIMB 9279 / VKM B-1422 / R1), this protein is UDP-N-acetylmuramate--L-alanine ligase.